A 101-amino-acid polypeptide reads, in one-letter code: Chaperone modulatory protein CbpM (101 aa).

It belongs to the CbpM family.

In terms of biological role, interacts with CbpA and inhibits both the DnaJ-like co-chaperone activity and the DNA binding activity of CbpA. Together with CbpA, modulates the activity of the DnaK chaperone system. Does not inhibit the co-chaperone activity of DnaJ. The sequence is that of Chaperone modulatory protein CbpM from Pseudomonas putida (strain GB-1).